The primary structure comprises 510 residues: 2,3-bisphosphoglycerate-independent phosphoglycerate mutase (510 aa).

Positions 16 and 66 each coordinate Mn(2+). The active-site Phosphoserine intermediate is Ser66. Substrate-binding positions include His127, 156-157 (RD), Arg186, Arg192, 257-260 (RADR), and Lys333. The Mn(2+) site is built by Asp400, His404, Asp441, His442, and His460.

It belongs to the BPG-independent phosphoglycerate mutase family. In terms of assembly, monomer. Mn(2+) serves as cofactor.

The enzyme catalyses (2R)-2-phosphoglycerate = (2R)-3-phosphoglycerate. It participates in carbohydrate degradation; glycolysis; pyruvate from D-glyceraldehyde 3-phosphate: step 3/5. Its function is as follows. Catalyzes the interconversion of 2-phosphoglycerate and 3-phosphoglycerate. The protein is 2,3-bisphosphoglycerate-independent phosphoglycerate mutase of Gluconobacter oxydans (strain 621H) (Gluconobacter suboxydans).